Here is a 341-residue protein sequence, read N- to C-terminus: METKDLKKLAKAELHCHLDGSLSLDTIRQLAALAQVDVPQDDSELKQLVTAPETCGSLMDYLKTFDFIRPLLQTPQALTLAAYDVVKQAALENVIYIEIRFAPELSMDQGLTATQVVEAVLKGLEQGQKEFGIVAKAIVCGMRQSSLDISREIFANVLEWANKGLVGFDFAGNELDFPPAVLADLIKETQAYGLPFTLHAGECGCPNYIVDAIDLGIKRLGHVTAIHNQKDLLAKFIANDVTAELCFTSNLQTKAARTVEDFPYMQLRQAGAKLSINTDNRTVSDTNLTKEYELFVKHFETSVSDFLEHNRDAIKASFTSPAEKEALLARLDKAYQSYIKK.

Positions 15 and 17 each coordinate Zn(2+). The substrate site is built by His-17, Asp-19, and Gly-172. His-199 provides a ligand contact to Zn(2+). Glu-202 functions as the Proton donor in the catalytic mechanism. Asp-279 serves as a coordination point for Zn(2+).

This sequence belongs to the metallo-dependent hydrolases superfamily. Adenosine and AMP deaminases family. Adenosine deaminase subfamily. It depends on Zn(2+) as a cofactor.

The enzyme catalyses adenosine + H2O + H(+) = inosine + NH4(+). The catalysed reaction is 2'-deoxyadenosine + H2O + H(+) = 2'-deoxyinosine + NH4(+). In terms of biological role, catalyzes the hydrolytic deamination of adenosine and 2-deoxyadenosine. This Streptococcus equi subsp. zooepidemicus (strain MGCS10565) protein is Adenosine deaminase.